The primary structure comprises 340 residues: Adenine deaminase (340 aa).

Zn(2+) is bound by residues His-17, His-19, and His-197. Residue Glu-200 is the Proton donor of the active site. Residue Asp-278 coordinates Zn(2+). Substrate is bound at residue Asp-279.

This sequence belongs to the metallo-dependent hydrolases superfamily. Adenosine and AMP deaminases family. Adenine deaminase type 2 subfamily. The cofactor is Zn(2+).

The catalysed reaction is adenine + H2O + H(+) = hypoxanthine + NH4(+). In terms of biological role, catalyzes the hydrolytic deamination of adenine to hypoxanthine. Plays an important role in the purine salvage pathway and in nitrogen catabolism. In Streptomyces coelicolor (strain ATCC BAA-471 / A3(2) / M145), this protein is Adenine deaminase.